We begin with the raw amino-acid sequence, 117 residues long: Large ribosomal subunit protein uL18 (117 aa).

It belongs to the universal ribosomal protein uL18 family. Part of the 50S ribosomal subunit; part of the 5S rRNA/L5/L18/L25 subcomplex. Contacts the 5S and 23S rRNAs.

In terms of biological role, this is one of the proteins that bind and probably mediate the attachment of the 5S RNA into the large ribosomal subunit, where it forms part of the central protuberance. This is Large ribosomal subunit protein uL18 from Serratia proteamaculans (strain 568).